The following is a 326-amino-acid chain: Prenyl transferase nodC (326 aa).

A helical membrane pass occupies residues leucine 8–tryptophan 28. Position 95 (histidine 95) interacts with isopentenyl diphosphate. Mg(2+)-binding residues include aspartate 102 and aspartate 106. Arginine 111 contacts dimethylallyl diphosphate. An N-linked (GlcNAc...) asparagine glycan is attached at asparagine 139. Residue lysine 195 coordinates dimethylallyl diphosphate. Residue asparagine 210 is glycosylated (N-linked (GlcNAc...) asparagine).

Belongs to the FPP/GGPP synthase family.

The protein localises to the membrane. The protein operates within secondary metabolite biosynthesis. Functionally, cytochrome P450 monooxygenase; part of the gene cluster that mediates the biosynthesis of the indole diterpenes nodulisporic acids (NA). Nodulisporic acid A (NAA) and its chemically modified derivatives are of particular significance because of their highly potent insecticidal activity against blood-feeding arthropods and lack of observable adverse effects on mammals, in particular the tremogenicity associated with the paspaline-derived IDTs is not observed. The geranylgeranyl diphosphate (GGPP) synthase ggs1, localized outside of the cluster, is proposed to catalyze the first step in nodulisporic acid biosynthesis via conversion of farnesyl pyrophosphate and isopentyl pyrophosphate into geranylgeranyl pyrophosphate (GGPP). Condensation of indole-3-glycerol phosphate with GGPP by the prenyl transferase nodC then forms 3-geranylgeranylindole (3-GGI). Epoxidation by the FAD-dependent monooxygenase nodM leads to a single-epoxidized-GGI that is substrate of the terpene cyclase nodB for cyclization to yield emindole SB. The terminal methyl carbon, C28, of emindole SB is then oxidized by the cytochrome P450 monooxygenase nodW to produce nodulisporic acid F (NAF), the pentacyclic core of NAA. NAF is converted to nodulisporic acid E (NAE) via prenylation. This step is probably performed by one of the indole diterpene prenyltransferases nodD1 or nodD2. Several oxidation steps performed by the FAD-linked oxidoreductase nodO and one of the cytochrome P450 monooxygenase nodR, nodX or nodZ further convert NAE to nodulisporic acid D (NAD). NAD is substrate of cytochrome P450 monooxygenase nodJ to produce the precursor of nodulisporic acid C (NAC), converted to NAC by one of the indole diterpene prenyltransferases nodD1 or nodD2. The FAD-dependent monooxygenase nodY2 then oxidizes NAC to nodulisporic acid B (NAB). Finally NAB is converted to NAA by one of the cytochrome P450 monooxygenases nodR, nodX or nodZ. The protein is Prenyl transferase nodC of Hypoxylon pulicicidum.